We begin with the raw amino-acid sequence, 298 residues long: HTH-type transcriptional regulator ArgP (298 aa).

The HTH lysR-type domain occupies 4-60 (LDYKWIEALDAVVAQGGFERAAEELYISQSAVSQRIKQLERFLAQSVLIREQPPKPT). Residues 21–40 (FERAAEELYISQSAVSQRIK) constitute a DNA-binding region (H-T-H motif).

The protein belongs to the LysR transcriptional regulatory family. In terms of assembly, homodimer.

Its function is as follows. Controls the transcription of genes involved in arginine and lysine metabolism. This chain is HTH-type transcriptional regulator ArgP, found in Vibrio vulnificus (strain YJ016).